A 75-amino-acid chain; its full sequence is Tautomerase PptA (75 aa).

The active-site Proton acceptor; via imino nitrogen is Pro-2.

This sequence belongs to the 4-oxalocrotonate tautomerase family. PptA subfamily. As to quaternary structure, homodimer.

Its subcellular location is the cytoplasm. The sequence is that of Tautomerase PptA from Escherichia coli O127:H6 (strain E2348/69 / EPEC).